A 732-amino-acid polypeptide reads, in one-letter code: 1,4-alpha-glucan branching enzyme GlgB 1 (732 aa).

Catalysis depends on aspartate 411, which acts as the Nucleophile. The active-site Proton donor is glutamate 464.

It belongs to the glycosyl hydrolase 13 family. GlgB subfamily. Monomer.

It carries out the reaction Transfers a segment of a (1-&gt;4)-alpha-D-glucan chain to a primary hydroxy group in a similar glucan chain.. Its pathway is glycan biosynthesis; glycogen biosynthesis. In terms of biological role, catalyzes the formation of the alpha-1,6-glucosidic linkages in glycogen by scission of a 1,4-alpha-linked oligosaccharide from growing alpha-1,4-glucan chains and the subsequent attachment of the oligosaccharide to the alpha-1,6 position. In Xanthomonas oryzae pv. oryzae (strain KACC10331 / KXO85), this protein is 1,4-alpha-glucan branching enzyme GlgB 1.